The following is a 47-amino-acid chain: Ribosome-inactivating protein luffin P1 (47 aa).

Disulfide bonds link cysteine 12–cysteine 33 and cysteine 16–cysteine 29.

Homotetramer.

It catalyses the reaction Endohydrolysis of the N-glycosidic bond at one specific adenosine on the 28S rRNA.. Functionally, inhibits protein synthesis in animal cells. The polypeptide is Ribosome-inactivating protein luffin P1 (Luffa aegyptiaca (Sponge gourd)).